A 436-amino-acid polypeptide reads, in one-letter code: 3-ketoacyl-CoA thiolase (436 aa).

C99 serves as the catalytic Acyl-thioester intermediate. Active-site proton acceptor residues include H392 and C422.

The protein belongs to the thiolase-like superfamily. Thiolase family. As to quaternary structure, heterotetramer of two alpha chains (FadJ) and two beta chains (FadI).

The protein localises to the cytoplasm. It carries out the reaction an acyl-CoA + acetyl-CoA = a 3-oxoacyl-CoA + CoA. Its pathway is lipid metabolism; fatty acid beta-oxidation. Functionally, catalyzes the final step of fatty acid oxidation in which acetyl-CoA is released and the CoA ester of a fatty acid two carbons shorter is formed. This is 3-ketoacyl-CoA thiolase from Escherichia coli O6:H1 (strain CFT073 / ATCC 700928 / UPEC).